Here is a 285-residue protein sequence, read N- to C-terminus: BAG family molecular chaperone regulator 2 (285 aa).

The region spanning 37 to 113 is the Ubiquitin-like domain; sequence RGIRVRVKYG…LILIEDPISQ (77 aa). In terms of domain architecture, BAG spans 132–210; it reads AISDISFQVE…KYVEALDLLK (79 aa). Ser-244 carries the post-translational modification Phosphoserine.

In terms of assembly, binds to the ATPase domain of HSP70/HSC70 chaperones.

In terms of biological role, co-chaperone that regulates diverse cellular pathways, such as programmed cell death and stress responses. The polypeptide is BAG family molecular chaperone regulator 2 (BAG2) (Arabidopsis thaliana (Mouse-ear cress)).